We begin with the raw amino-acid sequence, 427 residues long: Methylthioribose kinase 2 (427 aa).

ATP-binding positions include 49–53 (DGNLN), Lys-68, and 122–124 (RYI). Asn-51 is a substrate binding site. Asp-243 provides a ligand contact to substrate. 260-262 (DPE) is a binding site for ATP. Position 370 (Arg-370) interacts with substrate.

Belongs to the methylthioribose kinase family. Homodimer.

The enzyme catalyses 5-(methylsulfanyl)-D-ribose + ATP = 5-(methylsulfanyl)-alpha-D-ribose 1-phosphate + ADP + H(+). It functions in the pathway amino-acid biosynthesis; L-methionine biosynthesis via salvage pathway; S-methyl-5-thio-alpha-D-ribose 1-phosphate from S-methyl-5'-thioadenosine (hydrolase route): step 2/2. In terms of biological role, catalyzes the phosphorylation of methylthioribose into methylthioribose-1-phosphate. The polypeptide is Methylthioribose kinase 2 (MTK2) (Oryza sativa subsp. japonica (Rice)).